The sequence spans 770 residues: MNKYKPVPKLSSQSPVHHTNLRIPPSGRPFKKEDFLNLISKDSLESDSESLPQEAKSWSDIKDQIQDKDMEPDSLEEDSPSETEEAVNRKAAHNTNREDLSAHDAGVNHSQHQVEDKYSDLRYDPNWKNKREEGQPLAGEALPGSADSSSENLPLAPLYPSREPSMGLSAGKGKEKKSPQSEASLLGSEFLSPKYERSTRQNGFFSELSDSDQEEKSSGLSQYLKSSSSHNDVFLPGSRGPRRRKSKQYFVEKNKLTLGLPMPKTDSYLQLHNKKRGETRLEQISYPVRDTDKMTVQNDKEVENTFMDPEDKWHQRAKQLKNYQEHLSQYEDTKSGNVPRGQSSDAANGQQPSRRTAKARVRKQRKHQKGLKSLGTKELVVSQNNQNNPFQQPQNQRQTADASAKHELAAQTNASNPNLQDARTLTHNPKVTSDSFVSPKQALDRALYKNSISGLNANKRRGHRREEERILYQPQPIYVFSDTHLQDFNELPHRHESPSQRAPQSDHHMNTHRSTKTKKPAKQPQAETKYKNIEMLWKFHSSSDMEPASASPDSRLAQIMEQHQQALMQLAEVQPSEGSLASIILPPILSRVESESQLNSERSHRHQVKMARSNSEGYLLQLERGKRHRKRSSTKSSKLKGYQKRDVKLGGLGPDFASVRDKMQMLMQQKEYAQQVKDYNMKALSILSKPQTSKTESKSAISRKKALDYAKTIPKPKPPNLPDQTAKKTKNSRHSEKEGGLPEISLLEILQSRHEREKQAVAAFKVLHIV.

5 disordered regions span residues 1–249 (MNKY…SKQY), 295–438 (TVQN…SFVS), 493–527 (HRHE…PQAE), 595–647 (ESQL…KRDV), and 708–740 (DYAK…KEGG). Residues 57 to 71 (SWSDIKDQIQDKDME) are compositionally biased toward basic and acidic residues. Acidic residues predominate over residues 72–85 (PDSLEEDSPSETEE). Residues 112–134 (HQVEDKYSDLRYDPNWKNKREEG) are compositionally biased toward basic and acidic residues. Positions 218–229 (SGLSQYLKSSSS) are enriched in low complexity. Positions 295 to 314 (TVQNDKEVENTFMDPEDKWH) are enriched in basic and acidic residues. Over residues 340 to 354 (RGQSSDAANGQQPSR) the composition is skewed to polar residues. Positions 355-370 (RTAKARVRKQRKHQKG) are enriched in basic residues. Positions 383–398 (QNNQNNPFQQPQNQRQ) are enriched in low complexity. Polar residues predominate over residues 410-438 (AQTNASNPNLQDARTLTHNPKVTSDSFVS). The span at 493–509 (HRHESPSQRAPQSDHHM) shows a compositional bias: basic and acidic residues. 2 stretches are compositionally biased toward basic residues: residues 510–521 (NTHRSTKTKKPA) and 625–642 (GKRH…LKGY).

Expressed in the brain, specifically in hypothalamus, pineal gland, and ependymal cells of the aqueduct of Sylvius, as well as in the choroid plexus of the third ventricle. Expressed in the ependymal cells lining the lateral ventricles (at protein level).

Functionally, required for the normal development of cilia in brain ependymal cells lining the ventricular surfaces. This chain is Jhy protein, found in Mus musculus (Mouse).